Consider the following 131-residue polypeptide: Peptide methionine sulfoxide reductase MsrB (131 aa).

The MsrB domain maps to 8 to 130 (DAEWRAQLTD…NSVCLDLKRS (123 aa)). The Zn(2+) site is built by C47, C50, C96, and C99. Residue C119 is the Nucleophile of the active site.

The protein belongs to the MsrB Met sulfoxide reductase family. The cofactor is Zn(2+).

The enzyme catalyses L-methionyl-[protein] + [thioredoxin]-disulfide + H2O = L-methionyl-(R)-S-oxide-[protein] + [thioredoxin]-dithiol. The polypeptide is Peptide methionine sulfoxide reductase MsrB (Alkalilimnicola ehrlichii (strain ATCC BAA-1101 / DSM 17681 / MLHE-1)).